The sequence spans 883 residues: Glutamate receptor 2 (883 aa).

Positions 1–24 are cleaved as a signal peptide; it reads MQKIMHISVLLSPVLWGLIFGVSS. The Extracellular portion of the chain corresponds to 25-543; that stretch reads NSIQIGGLFP…GVFSFLDPLA (519 aa). Residues cysteine 78 and cysteine 330 are joined by a disulfide bond. N-linked (GlcNAc...) asparagine glycans are attached at residues asparagine 256, asparagine 370, asparagine 406, and asparagine 413. L-glutamate-binding residues include proline 499, threonine 501, and arginine 506. The helical transmembrane segment at 544-564 threads the bilayer; that stretch reads YEIWMCIVFAYIGVSVVLFLV. The Cytoplasmic portion of the chain corresponds to 565–591; sequence SRFSPYEWHTEEFEDGRETQSSESTNE. The helical; Pore-forming intramembrane region spans 592–607; it reads FGIFNSLWFSLGAFMQ. The stretch at 608-610 is an intramembrane region; it reads QGC. The S-palmitoyl cysteine moiety is linked to residue cysteine 610. At 611 to 616 the chain is on the cytoplasmic side; sequence DISPRS. A helical membrane pass occupies residues 617–637; sequence LSGRIVGGVWWFFTLIIISSY. Residues 638-812 lie on the Extracellular side of the membrane; sequence TANLAAFLTV…EKTSALSLSN (175 aa). The L-glutamate site is built by serine 675 and threonine 676. At serine 683 the chain carries Phosphoserine; by PKC. Residue serine 717 is modified to Phosphoserine; by PKG. An L-glutamate-binding site is contributed by glutamate 726. An intrachain disulfide couples cysteine 739 to cysteine 794. A helical membrane pass occupies residues 813–833; it reads VAGVFYILVGGLGLAMLVALI. Residues 834 to 883 lie on the Cytoplasmic side of the membrane; sequence EFCYKSRAEAKRMKVAKNAQNINPSSSQNSQNFATYKEGYNVYGIESVKI. Cysteine 836 carries the S-palmitoyl cysteine lipid modification. Serine 860 and serine 863 each carry phosphoserine. The required for interaction with IQSEC1 stretch occupies residues 867 to 877; it reads ATYKEGYNVYG. Tyrosine 876 is modified (phosphotyrosine). Phosphoserine is present on serine 880.

Belongs to the glutamate-gated ion channel (TC 1.A.10.1) family. GRIA2 subfamily. Homotetramer or heterotetramer of pore-forming glutamate receptor subunits. Tetramers may be formed by the dimerization of dimers. May interact with MPP4. Forms a ternary complex with GRIP1 and CSPG4. Interacts with ATAD1 in an ATP-dependent manner. ATAD1-catalyzed ATP hydrolysis disrupts binding to ATAD1 and to GRIP1 and leads to AMPAR complex disassembly. Interacts with GRIP1 and GRIP2. Interacts with NSF via its C-terminus. Isoform 1, but not isoform 3, interacts with PICK1. Interacts with CACNG2. Interacts with GRIA1 and SYNDIG1. Part of a complex containing GRIA2, NSF and NAPA and/or NAPB. Interacts with SNX27 (via PDZ domain); the interaction is required for recycling to the plasma membrane when endocytosed and prevent degradation in lysosomes. Interacts with LRFN1. Found in a complex with GRIA1, GRIA3, GRIA4, CNIH2, CNIH3, CACNG2, CACNG3, CACNG4, CACNG5, CACNG7 and CACNG8. Interacts with CACNG5. Interacts with OLFM2. Interacts with AP4B1, AP4E1 and AP4M1; probably indirect it mediates the somatodendritic localization of GRIA2 in neurons. Forms a complex with GRIP1, NSG1 and STX12; controls the intracellular fate of AMPAR and the endosomal sorting of the GRIA2 subunit toward recycling and membrane targeting. Interacts with IQSEC1; the interaction is required for ARF6 activation. Interacts (heterotetramer form) with CNIH2 and CNIH3; this interaction promotes expression at the plasma membrane and extensively modulates their gating properties by slowing deactivation and desensitization kinetics. Post-translationally, palmitoylated. Depalmitoylated upon L-glutamate stimulation. ZDHHC3/GODZ specifically palmitoylates Cys-610, which leads to Golgi retention and decreased cell surface expression. In contrast, Cys-836 palmitoylation does not affect cell surface expression but regulates stimulation-dependent endocytosis. In terms of processing, N-glycosylated. Ubiquitinated by RNF167, leading to its degradation. Post-translationally, phosphorylation at Tyr-876 is required for interaction with IQSEC1 and ARF6 activation, which in turn triggers AMPAR internalization for persistent synaptic depression. Detected in brain cortex, hippocampus and cerebellum (at protein level). Detected in hippocampus.

Its subcellular location is the cell membrane. It localises to the postsynaptic cell membrane. The protein localises to the postsynaptic density membrane. It carries out the reaction Ca(2+)(in) = Ca(2+)(out). It catalyses the reaction Na(+)(in) = Na(+)(out). Ionotropic glutamate receptor that functions as a ligand-gated cation channel, gated by L-glutamate and glutamatergic agonists such as alpha-amino-3-hydroxy-5-methyl-4-isoxazolepropionic acid (AMPA), quisqualic acid, and kainic acid. L-glutamate acts as an excitatory neurotransmitter at many synapses in the central nervous system and plays an important role in fast excitatory synaptic transmission. Binding of the excitatory neurotransmitter L-glutamate induces a conformation change, leading to the opening of the cation channel, and thereby converts the chemical signal to an electrical impulse upon entry of monovalent and divalent cations such as sodium and calcium. The receptor then desensitizes rapidly and enters in a transient inactive state, characterized by the presence of bound agonist. In the presence of CACNG4 or CACNG7 or CACNG8, shows resensitization which is characterized by a delayed accumulation of current flux upon continued application of L-glutamate. Through complex formation with NSG1, GRIP1 and STX12 controls the intracellular fate of AMPAR and the endosomal sorting of the GRIA2 subunit toward recycling and membrane targeting. This chain is Glutamate receptor 2, found in Mus musculus (Mouse).